Consider the following 777-residue polypeptide: Semaphorin-4F (777 aa).

A signal peptide spans 1-40; the sequence is MLARAERPRPGPRPPPVSLFPPPSSLLLLLLAMLSAPVCG. Residues 41-667 lie on the Extracellular side of the membrane; that stretch reads RVPRSVPRTS…PANRAHTVVG (627 aa). Residues 48 to 516 enclose the Sema domain; that stretch reads RTSLPISEAD…SHTEVTQVNT (469 aa). N-linked (GlcNAc...) asparagine glycosylation occurs at asparagine 70. The cysteines at positions 118 and 128 are disulfide-linked. Asparagine 139 is a glycosylation site (N-linked (GlcNAc...) asparagine). 3 cysteine pairs are disulfide-bonded: cysteine 146-cysteine 155, cysteine 279-cysteine 390, and cysteine 303-cysteine 349. N-linked (GlcNAc...) asparagine glycosylation is present at asparagine 515. Residues 518–569 form the PSI domain; that stretch reads NCGRLQSCSECILAQDPVCAWSFRLDACVAHAGEHRGMVQDIESADVSSLCP. Cystine bridges form between cysteine 519/cysteine 536, cysteine 528/cysteine 545, and cysteine 593/cysteine 634. An Ig-like C2-type domain is found at 586-641; that stretch reads VGHVVLPCSPSSAWASCVWHQPSGVTSLTPRRDGLEVVVTPGAMGAYACECQEGGA. The helical transmembrane segment at 668-688 threads the bilayer; sequence AGLVGFFLGVLAASLTLLLIG. Residues 689 to 777 are Cytoplasmic-facing; that stretch reads RRQQRRRQRE…PLATCDETSI (89 aa). The segment at 703 to 742 is disordered; that stretch reads DKVGLDLGAPPSGTTSYSQDPPSPSPEDERLPLALGKRGS. 2 positions are modified to phosphoserine: serine 725 and serine 727. The short motif at 775-777 is the PDZ-binding element; that stretch reads TSI.

Belongs to the semaphorin family. Interacts (via PDZ-binding motif) with DLG4/SAP90 (via PDZ domain 2); this interaction may promote translocation of DLG4/SAP90 to the membrane. In terms of tissue distribution, expressed throughout the adult brain, where it shows particularly strong expression in the hippocampus, corpus callosum, granular layer and deep nuclei of the cerebellum, and the mitral layer of the olfactory bulb (at protein level). At the cellular level, detected in neuronal precursors, postmitotic neurons, pyramidal neurons, and glial cells including mature oligodendocytes and oligodendroglial precursor cells (at protein level).

The protein resides in the cell membrane. It is found in the postsynaptic density. The protein localises to the perikaryon. Its subcellular location is the cell projection. It localises to the dendrite. In terms of biological role, probable cell surface receptor that regulates oligodendroglial precursor cell migration. Might also regulate differentiation of oligodendroglial precursor cells. Has growth cone collapse activity against retinal ganglion-cell axons. This chain is Semaphorin-4F (Sema4f), found in Mus musculus (Mouse).